The primary structure comprises 65 residues: Protein translocase subunit SecE (65 aa).

A helical transmembrane segment spans residues 38–58 (IVIVTVVFFLIFFYALDLGIG).

It belongs to the SecE/SEC61-gamma family. As to quaternary structure, component of the Sec protein translocase complex. Heterotrimer consisting of SecY, SecE and SecG subunits. The heterotrimers can form oligomers, although 1 heterotrimer is thought to be able to translocate proteins. Interacts with the ribosome. Interacts with SecDF, and other proteins may be involved. Interacts with SecA.

Its subcellular location is the cell membrane. In terms of biological role, essential subunit of the Sec protein translocation channel SecYEG. Clamps together the 2 halves of SecY. May contact the channel plug during translocation. This chain is Protein translocase subunit SecE, found in Staphylococcus carnosus (strain TM300).